The primary structure comprises 366 residues: Histidinol-phosphate aminotransferase 2 (366 aa).

Polar residues predominate over residues Met-1–Gln-11. The disordered stretch occupies residues Met-1–Gln-21. Lys-222 bears the N6-(pyridoxal phosphate)lysine mark.

This sequence belongs to the class-II pyridoxal-phosphate-dependent aminotransferase family. Histidinol-phosphate aminotransferase subfamily. In terms of assembly, homodimer. Requires pyridoxal 5'-phosphate as cofactor.

It catalyses the reaction L-histidinol phosphate + 2-oxoglutarate = 3-(imidazol-4-yl)-2-oxopropyl phosphate + L-glutamate. It functions in the pathway amino-acid biosynthesis; L-histidine biosynthesis; L-histidine from 5-phospho-alpha-D-ribose 1-diphosphate: step 7/9. This is Histidinol-phosphate aminotransferase 2 (hisC2) from Bacillus cereus (strain ATCC 14579 / DSM 31 / CCUG 7414 / JCM 2152 / NBRC 15305 / NCIMB 9373 / NCTC 2599 / NRRL B-3711).